The chain runs to 449 residues: Bifunctional protein GlmU (449 aa).

A pyrophosphorylase region spans residues 1–228; the sequence is MSTALVILAA…EAETLGINSR (228 aa). Residues 8-11, lysine 22, glutamine 75, 80-81, 103-105, glycine 140, glutamate 154, asparagine 169, and asparagine 226 contribute to the UDP-N-acetyl-alpha-D-glucosamine site; these read LAAG, GT, and YGD. Aspartate 105 is a Mg(2+) binding site. Asparagine 226 serves as a coordination point for Mg(2+). A linker region spans residues 229–249; that stretch reads ADLAAAEAVFQAHARAELLDI. The interval 250 to 449 is N-acetyltransferase; the sequence is GVTLTAPETV…RAKKAAKAKG (200 aa). Residues arginine 315 and lysine 333 each coordinate UDP-N-acetyl-alpha-D-glucosamine. Residue histidine 345 is the Proton acceptor of the active site. 2 residues coordinate UDP-N-acetyl-alpha-D-glucosamine: tyrosine 348 and asparagine 359. Residues alanine 362, 368 to 369, serine 387, threonine 405, and arginine 422 contribute to the acetyl-CoA site; that span reads NY.

In the N-terminal section; belongs to the N-acetylglucosamine-1-phosphate uridyltransferase family. This sequence in the C-terminal section; belongs to the transferase hexapeptide repeat family. Homotrimer. The cofactor is Mg(2+).

Its subcellular location is the cytoplasm. The enzyme catalyses alpha-D-glucosamine 1-phosphate + acetyl-CoA = N-acetyl-alpha-D-glucosamine 1-phosphate + CoA + H(+). It carries out the reaction N-acetyl-alpha-D-glucosamine 1-phosphate + UTP + H(+) = UDP-N-acetyl-alpha-D-glucosamine + diphosphate. It participates in nucleotide-sugar biosynthesis; UDP-N-acetyl-alpha-D-glucosamine biosynthesis; N-acetyl-alpha-D-glucosamine 1-phosphate from alpha-D-glucosamine 6-phosphate (route II): step 2/2. Its pathway is nucleotide-sugar biosynthesis; UDP-N-acetyl-alpha-D-glucosamine biosynthesis; UDP-N-acetyl-alpha-D-glucosamine from N-acetyl-alpha-D-glucosamine 1-phosphate: step 1/1. It functions in the pathway bacterial outer membrane biogenesis; LPS lipid A biosynthesis. Its function is as follows. Catalyzes the last two sequential reactions in the de novo biosynthetic pathway for UDP-N-acetylglucosamine (UDP-GlcNAc). The C-terminal domain catalyzes the transfer of acetyl group from acetyl coenzyme A to glucosamine-1-phosphate (GlcN-1-P) to produce N-acetylglucosamine-1-phosphate (GlcNAc-1-P), which is converted into UDP-GlcNAc by the transfer of uridine 5-monophosphate (from uridine 5-triphosphate), a reaction catalyzed by the N-terminal domain. The sequence is that of Bifunctional protein GlmU from Ruegeria sp. (strain TM1040) (Silicibacter sp.).